The following is a 225-amino-acid chain: uncharacterized protein (225 aa).

Polar residues predominate over residues methionine 1–serine 19. Positions methionine 1 to asparagine 21 are disordered.

This is an uncharacterized protein from Dictyostelium discoideum (Social amoeba).